Reading from the N-terminus, the 351-residue chain is Phosphoribosylformylglycinamidine cyclo-ligase (351 aa).

It belongs to the AIR synthase family.

It is found in the cytoplasm. The catalysed reaction is 2-formamido-N(1)-(5-O-phospho-beta-D-ribosyl)acetamidine + ATP = 5-amino-1-(5-phospho-beta-D-ribosyl)imidazole + ADP + phosphate + H(+). It participates in purine metabolism; IMP biosynthesis via de novo pathway; 5-amino-1-(5-phospho-D-ribosyl)imidazole from N(2)-formyl-N(1)-(5-phospho-D-ribosyl)glycinamide: step 2/2. The polypeptide is Phosphoribosylformylglycinamidine cyclo-ligase (Burkholderia multivorans (strain ATCC 17616 / 249)).